A 239-amino-acid chain; its full sequence is Purine nucleoside phosphorylase DeoD-type (239 aa).

H5 contributes to the a purine D-ribonucleoside binding site. Phosphate is bound by residues G21, R25, R44, and 88–91 (RVGS). Residues 180–182 (EME) and 204–205 (SD) contribute to the a purine D-ribonucleoside site. Catalysis depends on D205, which acts as the Proton donor.

This sequence belongs to the PNP/UDP phosphorylase family. As to quaternary structure, homohexamer; trimer of homodimers.

The catalysed reaction is a purine D-ribonucleoside + phosphate = a purine nucleobase + alpha-D-ribose 1-phosphate. The enzyme catalyses a purine 2'-deoxy-D-ribonucleoside + phosphate = a purine nucleobase + 2-deoxy-alpha-D-ribose 1-phosphate. Catalyzes the reversible phosphorolytic breakdown of the N-glycosidic bond in the beta-(deoxy)ribonucleoside molecules, with the formation of the corresponding free purine bases and pentose-1-phosphate. The polypeptide is Purine nucleoside phosphorylase DeoD-type (Citrobacter koseri (strain ATCC BAA-895 / CDC 4225-83 / SGSC4696)).